Reading from the N-terminus, the 292-residue chain is Protoheme IX farnesyltransferase (292 aa).

9 consecutive transmembrane segments (helical) span residues 13-33 (ILFG…QGHV), 35-55 (FLLL…GCVV), 84-104 (TALI…WFWV), 106-126 (PYSF…YSLW), 135-155 (TIIG…AVTH), 161-181 (ALLI…AIAI), 206-226 (VECL…YCFG), 231-251 (FFLL…IIGF), and 263-283 (LFLF…FTYQ).

Belongs to the UbiA prenyltransferase family. Protoheme IX farnesyltransferase subfamily.

The protein resides in the cell inner membrane. It carries out the reaction heme b + (2E,6E)-farnesyl diphosphate + H2O = Fe(II)-heme o + diphosphate. It participates in porphyrin-containing compound metabolism; heme O biosynthesis; heme O from protoheme: step 1/1. In terms of biological role, converts heme B (protoheme IX) to heme O by substitution of the vinyl group on carbon 2 of heme B porphyrin ring with a hydroxyethyl farnesyl side group. The polypeptide is Protoheme IX farnesyltransferase (Acinetobacter baylyi (strain ATCC 33305 / BD413 / ADP1)).